The following is a 297-amino-acid chain: Calponin-1 (297 aa).

Residues 28 to 131 (HQREQELREW…STLLALASMA (104 aa)) form the Calponin-homology (CH) domain. Calponin-like repeat units lie at residues 164–189 (IGLQ…RHLY), 204–229 (ISLQ…RQIF), and 243–268 (VSLQ…RQVY). Residue T170 is modified to Phosphothreonine; by ROCK2. S175 is subject to Phosphoserine; by ROCK2. 2 positions are modified to phosphothreonine; by ROCK2: T180 and T184. T259 is modified (phosphothreonine; by ROCK2).

It belongs to the calponin family. As to quaternary structure, part of cGMP kinase signaling complex at least composed of ACTA2/alpha-actin, CNN1/calponin H1, PLN/phospholamban, PRKG1 and ITPR1. As to expression, smooth muscle, and tissues containing significant amounts of smooth muscle.

In terms of biological role, thin filament-associated protein that is implicated in the regulation and modulation of smooth muscle contraction. It is capable of binding to actin, calmodulin and tropomyosin. The interaction of calponin with actin inhibits the actomyosin Mg-ATPase activity. This Mus musculus (Mouse) protein is Calponin-1 (Cnn1).